The sequence spans 263 residues: Transmembrane protein 176B (263 aa).

4 consecutive transmembrane segments (helical) span residues 61 to 81, 89 to 109, 121 to 141, and 197 to 217; these read LGVT…CLYF, AFGC…GTIV, VSCL…VLGV, and LFLA…VVSV. Phosphoserine occurs at positions 231, 240, and 253. Residues 239 to 263 are disordered; it reads ESERKLLDGHPAPASPAKEKIPAIL.

It belongs to the TMEM176 family. In terms of tissue distribution, ubiquitously expressed with higher expression in lung, liver, kidney and colon. Expressed in cerebellar granule cells.

The protein resides in the nucleus membrane. In terms of biological role, may play a role in the process of maturation of dendritic cells. Required for the development of cerebellar granule cells. The sequence is that of Transmembrane protein 176B (Tmem176b) from Mus musculus (Mouse).